The sequence spans 1625 residues: Nonribosomal peptide synthetase aclP (1625 aa).

A Carrier 1 domain is found at 47-123 (TTMNPSSQLL…ALFTDLLSSE (77 aa)). The residue at position 84 (S84) is an O-(pantetheine 4'-phosphoryl)serine. A disordered region spans residues 127–157 (IPIPDPSDDSDDLSNPSSSTGGSPRVATPIS). The tract at residues 286 to 567 (ASSQSTVIWA…KYFQRALQLL (282 aa)) is condensation 1. The tract at residues 614–997 (FESAVSRNPM…GRTDRQIKLR (384 aa)) is adenylation. In terms of domain architecture, Carrier 2 spans 1096–1171 (SPMEKLVGDA…HLAAAIDSGL (76 aa)). At S1131 the chain carries O-(pantetheine 4'-phosphoryl)serine. The segment at 1195–1585 (EWWHKYQINE…LQARIPLALS (391 aa)) is condensation 2.

This sequence belongs to the NRP synthetase family.

Its pathway is mycotoxin biosynthesis. Its function is as follows. Nonribosomal peptide synthetase; part of the gene cluster that mediates the biosynthesis of aspirochlorine (or antibiotic A30641), an unusual halogenated spiro compound with distinctive antifungal properties due to selective inhibition of protein biosynthesis, and which is also active against bacteria, viruses, and murine tumor cells. The non-ribosomal peptide synthetase (NRPS) aclP is responsible the formation of the diketopiperazine (DKP) core from the condensation of 2 phenylalanine residues. One Phe residue is tailored into chlorotyrosine by hydroxylation and chlorination, whereas the second Phe undergoes an unprecedented C-C bond cleavage to be converted into glycine. After formation of the DKP, sulfur is incorporated into the DKP by conjugation with glutathione by aclG, followed by its stepwise degradation to the thiol by aclI, aclJ and aclK, and the dithiol oxidation by aclT. In addition, oxygenases (aclB, aclC, aclL and aclO) and O-methyltransferases (aclM and aclU) act as tailoring enzymes to produce the intermediate dechloroaspirochlorine. Ultimately, chlorination of dechloroaspirochlorine by the halogenase aclH is the last step in the aspirochlorine pathway. This Aspergillus oryzae (strain ATCC 42149 / RIB 40) (Yellow koji mold) protein is Nonribosomal peptide synthetase aclP.